Reading from the N-terminus, the 352-residue chain is Holliday junction branch migration complex subunit RuvB (352 aa).

The interval 1–26 (MIETDKLRAAAPERLISPQPADRQED) is disordered. Residues 4-193 (TDKLRAAAPE…FGIVSRLEFY (190 aa)) form a large ATPase domain (RuvB-L) region. Residues Leu-32, Arg-33, Gly-74, Lys-77, Thr-78, Thr-79, 140–142 (EDF), Arg-183, Tyr-193, and Arg-230 contribute to the ATP site. A Mg(2+)-binding site is contributed by Thr-78. The interval 194-264 (TPDELGFIVS…VADAALRMLD (71 aa)) is small ATPAse domain (RuvB-S). The interval 267–352 (SLGLDLMDRK…RPGGTDLFGG (86 aa)) is head domain (RuvB-H). Residues Arg-322 and Arg-327 each coordinate DNA.

Belongs to the RuvB family. Homohexamer. Forms an RuvA(8)-RuvB(12)-Holliday junction (HJ) complex. HJ DNA is sandwiched between 2 RuvA tetramers; dsDNA enters through RuvA and exits via RuvB. An RuvB hexamer assembles on each DNA strand where it exits the tetramer. Each RuvB hexamer is contacted by two RuvA subunits (via domain III) on 2 adjacent RuvB subunits; this complex drives branch migration. In the full resolvosome a probable DNA-RuvA(4)-RuvB(12)-RuvC(2) complex forms which resolves the HJ.

It localises to the cytoplasm. The enzyme catalyses ATP + H2O = ADP + phosphate + H(+). Its function is as follows. The RuvA-RuvB-RuvC complex processes Holliday junction (HJ) DNA during genetic recombination and DNA repair, while the RuvA-RuvB complex plays an important role in the rescue of blocked DNA replication forks via replication fork reversal (RFR). RuvA specifically binds to HJ cruciform DNA, conferring on it an open structure. The RuvB hexamer acts as an ATP-dependent pump, pulling dsDNA into and through the RuvAB complex. RuvB forms 2 homohexamers on either side of HJ DNA bound by 1 or 2 RuvA tetramers; 4 subunits per hexamer contact DNA at a time. Coordinated motions by a converter formed by DNA-disengaged RuvB subunits stimulates ATP hydrolysis and nucleotide exchange. Immobilization of the converter enables RuvB to convert the ATP-contained energy into a lever motion, pulling 2 nucleotides of DNA out of the RuvA tetramer per ATP hydrolyzed, thus driving DNA branch migration. The RuvB motors rotate together with the DNA substrate, which together with the progressing nucleotide cycle form the mechanistic basis for DNA recombination by continuous HJ branch migration. Branch migration allows RuvC to scan DNA until it finds its consensus sequence, where it cleaves and resolves cruciform DNA. The protein is Holliday junction branch migration complex subunit RuvB of Azoarcus sp. (strain BH72).